The following is a 359-amino-acid chain: Mandelate racemase (359 aa).

Lys166 functions as the Proton acceptor; specific for S-mandelate in the catalytic mechanism. Mg(2+) is bound by residues Asp195, Glu221, and Glu247. The active-site Proton acceptor; specific for R-mandelate is the His297. Substrate is bound at residue Glu317.

It belongs to the mandelate racemase/muconate lactonizing enzyme family. As to quaternary structure, homooctamer. It depends on Mg(2+) as a cofactor.

It carries out the reaction (S)-mandelate = (R)-mandelate. Its pathway is aromatic compound metabolism; (R)-mandelate degradation; benzoate from (R)-mandelate: step 1/4. The polypeptide is Mandelate racemase (mdlA) (Pseudomonas putida (Arthrobacter siderocapsulatus)).